A 361-amino-acid polypeptide reads, in one-letter code: Epoxyqueuosine reductase (361 aa).

Catalysis depends on D147, which acts as the Proton donor. The 30-residue stretch at 193 to 222 (VDPAMDSEHCGRCSACLDICPTAAFVGPYR) folds into the 4Fe-4S ferredoxin-type domain. Residues C202, C205, C208, C212, C228, C255, C258, and C262 each contribute to the [4Fe-4S] cluster site.

This sequence belongs to the QueG family. As to quaternary structure, monomer. Requires cob(II)alamin as cofactor. It depends on [4Fe-4S] cluster as a cofactor.

Its subcellular location is the cytoplasm. It carries out the reaction epoxyqueuosine(34) in tRNA + AH2 = queuosine(34) in tRNA + A + H2O. It functions in the pathway tRNA modification; tRNA-queuosine biosynthesis. In terms of biological role, catalyzes the conversion of epoxyqueuosine (oQ) to queuosine (Q), which is a hypermodified base found in the wobble positions of tRNA(Asp), tRNA(Asn), tRNA(His) and tRNA(Tyr). The chain is Epoxyqueuosine reductase from Pseudomonas aeruginosa (strain ATCC 15692 / DSM 22644 / CIP 104116 / JCM 14847 / LMG 12228 / 1C / PRS 101 / PAO1).